The following is a 297-amino-acid chain: Bifunctional protein FolD 2 (297 aa).

Residues 164-166, serine 193, and isoleucine 234 contribute to the NADP(+) site; that span reads GRS.

Belongs to the tetrahydrofolate dehydrogenase/cyclohydrolase family. In terms of assembly, homodimer.

The enzyme catalyses (6R)-5,10-methylene-5,6,7,8-tetrahydrofolate + NADP(+) = (6R)-5,10-methenyltetrahydrofolate + NADPH. It catalyses the reaction (6R)-5,10-methenyltetrahydrofolate + H2O = (6R)-10-formyltetrahydrofolate + H(+). It functions in the pathway one-carbon metabolism; tetrahydrofolate interconversion. Catalyzes the oxidation of 5,10-methylenetetrahydrofolate to 5,10-methenyltetrahydrofolate and then the hydrolysis of 5,10-methenyltetrahydrofolate to 10-formyltetrahydrofolate. In Haloarcula marismortui (strain ATCC 43049 / DSM 3752 / JCM 8966 / VKM B-1809) (Halobacterium marismortui), this protein is Bifunctional protein FolD 2.